A 392-amino-acid polypeptide reads, in one-letter code: Extracellular metalloproteinase 4 (392 aa).

A propeptide spanning residues V1–S9 is cleaved from the precursor. 2 N-linked (GlcNAc...) asparagine glycosylation sites follow: N27 and N176. A Zn(2+)-binding site is contributed by H193. The active site involves E194. H197 serves as a coordination point for Zn(2+). 2 N-linked (GlcNAc...) asparagine glycosylation sites follow: N359 and N385.

Belongs to the peptidase M36 family. It depends on Zn(2+) as a cofactor.

The protein resides in the secreted. In terms of biological role, secreted metalloproteinase probably acting as a virulence factor. The protein is Extracellular metalloproteinase 4 (MEP4) of Trichophyton violaceum.